We begin with the raw amino-acid sequence, 353 residues long: Ubiquinol oxidase 1, mitochondrial (353 aa).

The transit peptide at 1–69 (MMTRGATRMT…RHFPVMGSRS (69 aa)) directs the protein to the mitochondrion. A disordered region spans residues 77 to 99 (DKQHDKKAENGSAAATGGGDGGD). The chain crosses the membrane as a helical span at residues 178-198 (AMMLETVAAVPGMVGGMLLHC). Fe cation is bound by residues Glu-182, Glu-221, and His-224. The helical transmembrane segment at 240-260 (ALVFAVQGVFFNAYFVTYLLS) threads the bilayer. Residues Glu-272, Glu-323, and His-326 each coordinate Fe cation.

The protein belongs to the alternative oxidase family. In terms of assembly, homodimer; disulfide-linked. Fe cation serves as cofactor.

It localises to the mitochondrion inner membrane. It catalyses the reaction 2 a ubiquinol + O2 = 2 a ubiquinone + 2 H2O. Its activity is regulated as follows. Stimulated by reduction of the disulfide bond and the presence of pyruvate. Functionally, catalyzes the cyanide-resistant oxidation of ubiquinol and the reduction of molecular oxygen to water, but does not translocate protons and consequently is not linked to oxidative phosphorylation. May increase respiration when the cytochrome respiratory pathway is restricted, or in response to low temperatures. This Nicotiana tabacum (Common tobacco) protein is Ubiquinol oxidase 1, mitochondrial (AOX1).